A 141-amino-acid polypeptide reads, in one-letter code: Galactose-6-phosphate isomerase subunit LacA (141 aa).

It belongs to the LacAB/RpiB family. In terms of assembly, heteromultimeric protein consisting of LacA and LacB.

It carries out the reaction aldehydo-D-galactose 6-phosphate = keto-D-tagatose 6-phosphate. It functions in the pathway carbohydrate metabolism; D-galactose 6-phosphate degradation; D-tagatose 6-phosphate from D-galactose 6-phosphate: step 1/1. The protein is Galactose-6-phosphate isomerase subunit LacA of Streptococcus pneumoniae (strain ATCC 700669 / Spain 23F-1).